The sequence spans 266 residues: Hydroxyethylthiazole kinase (266 aa).

Residue Met-43 coordinates substrate. ATP contacts are provided by Arg-119 and Thr-166. Position 193 (Gly-193) interacts with substrate.

It belongs to the Thz kinase family. Mg(2+) serves as cofactor.

The enzyme catalyses 5-(2-hydroxyethyl)-4-methylthiazole + ATP = 4-methyl-5-(2-phosphooxyethyl)-thiazole + ADP + H(+). The protein operates within cofactor biosynthesis; thiamine diphosphate biosynthesis; 4-methyl-5-(2-phosphoethyl)-thiazole from 5-(2-hydroxyethyl)-4-methylthiazole: step 1/1. Its function is as follows. Catalyzes the phosphorylation of the hydroxyl group of 4-methyl-5-beta-hydroxyethylthiazole (THZ). This is Hydroxyethylthiazole kinase from Methanococcus maripaludis (strain C5 / ATCC BAA-1333).